The chain runs to 97 residues: Small integral membrane protein 8 (97 aa).

Residues 1–24 are disordered; the sequence is MSSAPEPPTFKKEPPKEKDFQSPG. Residues 9–20 show a composition bias toward basic and acidic residues; sequence TFKKEPPKEKDF. A helical transmembrane segment spans residues 48–67; that stretch reads PVMAFGLVTLSLCVAYIGYL.

It belongs to the SMIM8 family.

Its subcellular location is the membrane. The protein is Small integral membrane protein 8 (SMIM8) of Pongo abelii (Sumatran orangutan).